A 250-amino-acid chain; its full sequence is Short-chain dehydrogenase RED3 (250 aa).

The NADP(+) site is built by Ile16, Ser35, Glu63, and Asn91. Residues Ser145 and Tyr164 each act as proton donor in the active site. Positions 164, 168, 195, and 197 each coordinate NADP(+). The Lowers pKa of active site Tyr role is filled by Lys168.

It belongs to the short-chain dehydrogenases/reductases (SDR) family.

The protein operates within polyketide biosynthesis. Functionally, short-chain dehydrogenase; part of the gene cluster that mediates the biosynthesis of pyriculol and pyriculariol, two heptaketides that induce lesion formation upon application on rice leaves but are dispensable for pathogenicity. The highly reducing polyketide synthase synthesizes the heptaketide backbone of pyriculol and pyriculariol. Pyriculol and pyriculariol contain several hydroxyl moieties and double bonds, so it can be assumed that several reduction steps occur during biosynthesis. These reactions could be executed by PKS19 itself or partly by the tailoring enzymes OXR1, OXR2, RED1, RED2 or RED3, identified within the cluster. The FAD-linked oxidoreductase OXR1 is the only tailoring enzyme for which the function has been determined yet, and is involved in the oxidation of dihydropyriculol and dihydropyriculariol into pyriculol and pyriculariol, respectively. The chain is Short-chain dehydrogenase RED3 from Pyricularia oryzae (strain 70-15 / ATCC MYA-4617 / FGSC 8958) (Rice blast fungus).